We begin with the raw amino-acid sequence, 118 residues long: MARIAGVNIPDNKHTVISLTYIYGVGRTTAQKICAATGVNPAAKIKDLTDEQIEQLRGEVAKVNTEGDLRREVNMKIKRLMDLGCYRGLRHRKGLPVRGQRTKTNARTRKGPRKPIRK.

Residues 93-118 form a disordered region; the sequence is KGLPVRGQRTKTNARTRKGPRKPIRK.

Belongs to the universal ribosomal protein uS13 family. Part of the 30S ribosomal subunit. Forms a loose heterodimer with protein S19. Forms two bridges to the 50S subunit in the 70S ribosome.

Located at the top of the head of the 30S subunit, it contacts several helices of the 16S rRNA. In the 70S ribosome it contacts the 23S rRNA (bridge B1a) and protein L5 of the 50S subunit (bridge B1b), connecting the 2 subunits; these bridges are implicated in subunit movement. Contacts the tRNAs in the A and P-sites. In Ectopseudomonas mendocina (strain ymp) (Pseudomonas mendocina), this protein is Small ribosomal subunit protein uS13.